Consider the following 323-residue polypeptide: tRNA U34 carboxymethyltransferase (323 aa).

Residues K91, W105, K110, G130, D152–T154, I181–E182, M196, Y200, and R315 each bind carboxy-S-adenosyl-L-methionine.

This sequence belongs to the class I-like SAM-binding methyltransferase superfamily. CmoB family. As to quaternary structure, homotetramer.

The enzyme catalyses carboxy-S-adenosyl-L-methionine + 5-hydroxyuridine(34) in tRNA = 5-carboxymethoxyuridine(34) in tRNA + S-adenosyl-L-homocysteine + H(+). Functionally, catalyzes carboxymethyl transfer from carboxy-S-adenosyl-L-methionine (Cx-SAM) to 5-hydroxyuridine (ho5U) to form 5-carboxymethoxyuridine (cmo5U) at position 34 in tRNAs. In Escherichia coli O7:K1 (strain IAI39 / ExPEC), this protein is tRNA U34 carboxymethyltransferase.